The primary structure comprises 793 residues: Cation channel sperm-associated auxiliary subunit delta (793 aa).

The signal sequence occupies residues 1–20 (MLMLMLVAAVTMWLRPLVTA). Topologically, residues 21–725 (QPLCRARTVR…AFPVQLVSAG (705 aa)) are extracellular. 7 disulfide bridges follow: C24–C370, C60–C146, C145–C153, C388–C497, C511–C703, C526–C573, and C625–C653. An N-linked (GlcNAc...) asparagine glycan is attached at N128. N231, N241, N473, N539, and N631 each carry an N-linked (GlcNAc...) asparagine glycan. Residues 726–747 (VVMVLLISSILGSVWLAYMIPR) traverse the membrane as a helical segment. Residues 748–793 (LLRTARGRRMTSFVAQLYGRCKTVCQFRASATARTGSKPMGRHRSS) lie on the Cytoplasmic side of the membrane.

It belongs to the CATSPERD family. In terms of assembly, component of the CatSper complex or CatSpermasome composed of the core pore-forming members CATSPER1, CATSPER2, CATSPER3 and CATSPER4 as well as auxiliary members CATSPERB, CATSPERG, CATSPERD, CATSPERE, CATSPERZ, C2CD6/CATSPERT, TMEM249, TMEM262 and EFCAB9. HSPA1 may be an additional auxiliary complex member. The core complex members CATSPER1, CATSPER2, CATSPER3 and CATSPER4 form a heterotetrameric channel. The auxiliary CATSPERB, CATSPERG, CATSPERD and CATSPERE subunits form a pavilion-like structure over the pore which stabilizes the complex through interactions with CATSPER4, CATSPER3, CATSPER1 and CATSPER2 respectively. TMEM262/CATSPERH interacts with CATSPERB, further stabilizing the complex. C2CD6/CATSPERT interacts at least with CATSPERD and is required for targeting the CatSper complex in the flagellar membrane.

The protein localises to the cell projection. Its subcellular location is the cilium. It is found in the flagellum membrane. In terms of biological role, auxiliary component of the CatSper complex, a complex involved in sperm cell hyperactivation. Sperm cell hyperactivation is needed for sperm motility which is essential late in the preparation of sperm for fertilization. Required for CATSPER1 stability before intraflagellar transport and/or incorporation of the CatSper complex channel into the flagellar membrane. The polypeptide is Cation channel sperm-associated auxiliary subunit delta (Macaca fascicularis (Crab-eating macaque)).